A 402-amino-acid chain; its full sequence is Envelope glycoprotein D (402 aa).

Positions M1–G17 are cleaved as a signal peptide. 3 disulfides stabilise this stretch: C66/C189, C105/C205, and C117/C126. Positions Y238 to E316 are profusion. Positions A252–S350 are disordered. The segment covering P269–R278 has biased composition (basic residues). Residues E282–D292 are compositionally biased toward pro residues. Over residues R293–A304 the composition is skewed to basic and acidic residues. Residues I356–F376 traverse the membrane as a helical segment.

This sequence belongs to the herpesviridae glycoprotein D family. Not N-glycosylated.

It localises to the virion membrane. Functionally, envelope glycoprotein that binds to the host cell entry receptor NECTIN1, promoting the virus entry into host cells. In contrast, does not use host TNFRSF14 as receptor. May trigger fusion with host membrane, by recruiting the fusion machinery composed of gB and gH/gL. This Suid herpesvirus 1 (strain Rice) (SuHV-1) protein is Envelope glycoprotein D.